Here is a 252-residue protein sequence, read N- to C-terminus: Phosphate import ATP-binding protein PstB (252 aa).

The ABC transporter domain maps to 5–247 (MRGQDVKVFY…PKEQRTQDYI (243 aa)). 37–44 (GPSGCGKS) lines the ATP pocket.

This sequence belongs to the ABC transporter superfamily. Phosphate importer (TC 3.A.1.7) family. In terms of assembly, the complex is composed of two ATP-binding proteins (PstB), two transmembrane proteins (PstC and PstA) and a solute-binding protein (PstS).

Its subcellular location is the cell inner membrane. It catalyses the reaction phosphate(out) + ATP + H2O = ADP + 2 phosphate(in) + H(+). Functionally, part of the ABC transporter complex PstSACB involved in phosphate import. Responsible for energy coupling to the transport system. The protein is Phosphate import ATP-binding protein PstB of Bartonella henselae (strain ATCC 49882 / DSM 28221 / CCUG 30454 / Houston 1) (Rochalimaea henselae).